The sequence spans 446 residues: tRNA-2-methylthio-N(6)-dimethylallyladenosine synthase (446 aa).

Positions 3–120 constitute an MTTase N-terminal domain; the sequence is KKIYIKTFGC…LPEMLKQRRS (118 aa). [4Fe-4S] cluster contacts are provided by cysteine 12, cysteine 49, cysteine 83, cysteine 157, cysteine 161, and cysteine 164. The region spanning 143-375 is the Radical SAM core domain; that stretch reads KVEGATAFVS…QAVIDQNTRR (233 aa). Residues 378–444 enclose the TRAM domain; the sequence is DEMVGSVQRI…AYTLRGEIVV (67 aa).

It belongs to the methylthiotransferase family. MiaB subfamily. Monomer. Requires [4Fe-4S] cluster as cofactor.

It localises to the cytoplasm. The catalysed reaction is N(6)-dimethylallyladenosine(37) in tRNA + (sulfur carrier)-SH + AH2 + 2 S-adenosyl-L-methionine = 2-methylsulfanyl-N(6)-dimethylallyladenosine(37) in tRNA + (sulfur carrier)-H + 5'-deoxyadenosine + L-methionine + A + S-adenosyl-L-homocysteine + 2 H(+). Catalyzes the methylthiolation of N6-(dimethylallyl)adenosine (i(6)A), leading to the formation of 2-methylthio-N6-(dimethylallyl)adenosine (ms(2)i(6)A) at position 37 in tRNAs that read codons beginning with uridine. This Herminiimonas arsenicoxydans protein is tRNA-2-methylthio-N(6)-dimethylallyladenosine synthase.